The sequence spans 200 residues: ATP-dependent Clp protease proteolytic subunit (200 aa).

The active-site Nucleophile is S97. Residue H122 is part of the active site.

Belongs to the peptidase S14 family. Fourteen ClpP subunits assemble into 2 heptameric rings which stack back to back to give a disk-like structure with a central cavity, resembling the structure of eukaryotic proteasomes.

It localises to the cytoplasm. It carries out the reaction Hydrolysis of proteins to small peptides in the presence of ATP and magnesium. alpha-casein is the usual test substrate. In the absence of ATP, only oligopeptides shorter than five residues are hydrolyzed (such as succinyl-Leu-Tyr-|-NHMec, and Leu-Tyr-Leu-|-Tyr-Trp, in which cleavage of the -Tyr-|-Leu- and -Tyr-|-Trp bonds also occurs).. Its function is as follows. Cleaves peptides in various proteins in a process that requires ATP hydrolysis. Has a chymotrypsin-like activity. Plays a major role in the degradation of misfolded proteins. In Oleidesulfovibrio alaskensis (strain ATCC BAA-1058 / DSM 17464 / G20) (Desulfovibrio alaskensis), this protein is ATP-dependent Clp protease proteolytic subunit.